Here is a 410-residue protein sequence, read N- to C-terminus: Inositol hexakisphosphate kinase 3 (410 aa).

211 to 219 (PCVLDLKMG) is a substrate binding site. Positions 333–358 (QEPPERAPGSPHPHEAPQAAHGSSPG) are disordered.

It belongs to the inositol phosphokinase (IPK) family. In terms of tissue distribution, detected in brain.

It localises to the cytoplasm. It catalyses the reaction 1D-myo-inositol hexakisphosphate + ATP = 5-diphospho-1D-myo-inositol 1,2,3,4,6-pentakisphosphate + ADP. It carries out the reaction 1-diphospho-1D-myo-inositol 2,3,4,5,6-pentakisphosphate + ATP + H(+) = 1,5-bis(diphospho)-1D-myo-inositol 2,3,4,6-tetrakisphosphate + ADP. Converts inositol hexakisphosphate (InsP6) to diphosphoinositol pentakisphosphate (InsP7/PP-InsP5). Converts 1,3,4,5,6-pentakisphosphate (InsP5) to PP-InsP4. In Homo sapiens (Human), this protein is Inositol hexakisphosphate kinase 3 (IP6K3).